The following is a 741-amino-acid chain: IPGAFYIKNFMQVEFYLKSLTLEDIPNHGTIHFICNSWIYNSKVYKSDRIFFANNTYLPSETPAPLLKYREEELKNVRGDGSGERKEWDRVYDYDVYNDLGNPDKGAALARPVLGGSTLPYPRRGRTGRPKTKKDPNSEKPSDFVYLPRDEAFGHLKSSDFLAYGLKSVSQDVLPVLTDAFDGNLLSLEFDNFAEVHKLYEGGVTLPTNFLSKYAPIPIVKEIFRSDGEQFLKYPPPKVMQVNKSAWMTDEEFARETIAGVNPNVIKSLEEFPPRSKLDTQSFGDHTSIITKEHLEINLGGLTVEQAIQSKKLFILDHHDYLIPYLRRINASATKTYATRTIFFLKSDGTLAPLAIELSKPHPQGDEHGPVSEVYVPAYEGVEAYIWLLAKAYVVVNDSCYHQLVSHWLNTHAVVEPFVLATNRQLSVVHPVYKLLFPHYRDTMNINSLARKSLVNADGIIEKTFLWGRYALELSAVIYKDWSLHDQALPNDLVKRGVAVKDPSAPHGVKLVIEDYPYASDGLEIWDAIKSWVVEYVAFYYKSDEVLQQDSELQAWWKELVQVGHGDLKDKPWWPKMQSRENLVEVSTTLIWIASALHAAVNFGQYPYGGLILNRPTISRRFMPEKGSAEYAALAKNPEKEFLKTITGKKETLIDLTVIEILSRHASDEIYLGERDGGDHWTSDAGPLEAFKRFGKKLAEIEKKLVQKNNDETLRNRTGPAKMPYTLLYPSSEEGLTFRGI.

Residues 1–53 (IPGAFYIKNFMQVEFYLKSLTLEDIPNHGTIHFICNSWIYNSKVYKSDRIFFA) form the PLAT domain. In terms of domain architecture, Lipoxygenase spans 56–741 (TYLPSETPAP…SEEGLTFRGI (686 aa)). The interval 108–144 (ALARPVLGGSTLPYPRRGRTGRPKTKKDPNSEKPSDF) is disordered. Residues 123–132 (RRGRTGRPKT) are compositionally biased toward basic residues. Residues 133–144 (KKDPNSEKPSDF) show a composition bias toward basic and acidic residues. Histidine 407, histidine 412, histidine 598, and asparagine 602 together coordinate Fe cation.

Belongs to the lipoxygenase family. In terms of assembly, monomer. Fe cation serves as cofactor.

It localises to the cytoplasm. It carries out the reaction (9Z,12Z)-octadecadienoate + O2 = (9S)-hydroperoxy-(10E,12Z)-octadecadienoate. The enzyme catalyses (9Z,12Z)-octadecadienoate + O2 = (13S)-hydroperoxy-(9Z,11E)-octadecadienoate. It catalyses the reaction (9Z,12Z,15Z)-octadecatrienoate + O2 = (13S)-hydroperoxy-(9Z,11E,15Z)-octadecatrienoate. The protein operates within lipid metabolism; oxylipin biosynthesis. In terms of biological role, plant lipoxygenase may be involved in a number of diverse aspects of plant physiology including growth and development, pest resistance, and senescence or responses to wounding. It catalyzes the hydroperoxidation of lipids containing a cis,cis-1,4-pentadiene structure. This is Linoleate 9S-lipoxygenase from Phaseolus vulgaris (Kidney bean).